Here is a 166-residue protein sequence, read N- to C-terminus: Coiled-coil domain-containing protein 12 (166 aa).

M1 carries the N-acetylmethionine modification. The stretch at 8-28 forms a coiled coil; the sequence is VGRLEEEALRRKERLKALREK. Residues 21–53 are compositionally biased toward basic and acidic residues; that stretch reads RLKALREKTGRKDREDGEPQTKQLREEGEEVGK. Residues 21–55 form a disordered region; sequence RLKALREKTGRKDREDGEPQTKQLREEGEEVGKHR. At K53 the chain carries N6-acetyllysine. A Glycyl lysine isopeptide (Lys-Gly) (interchain with G-Cter in SUMO2) cross-link involves residue K94. A coiled-coil region spans residues 115–144; sequence DLKRDVAKKLEKLEKRTQRAIAELIRERLK. The tract at residues 146 to 166 is disordered; it reads QEDSLASAVDATTGQEACDSD. S149 and S165 each carry phosphoserine.

This chain is Coiled-coil domain-containing protein 12 (Ccdc12), found in Mus musculus (Mouse).